The following is a 637-amino-acid chain: tRNA 5-methylaminomethyl-2-thiouridine biosynthesis bifunctional protein MnmC (637 aa).

The segment at 1–20 (MSERIEWLEDGTAGGSPYSP) is disordered. The tract at residues 1–232 (MSERIEWLED…KRDNLQGEYQ (232 aa)) is tRNA (mnm(5)s(2)U34)-methyltransferase. Positions 255–637 (IGAGLAGSAV…YATRLQPSGS (383 aa)) are FAD-dependent cmnm(5)s(2)U34 oxidoreductase.

It in the N-terminal section; belongs to the methyltransferase superfamily. tRNA (mnm(5)s(2)U34)-methyltransferase family. The protein in the C-terminal section; belongs to the DAO family. Requires FAD as cofactor.

Its subcellular location is the cytoplasm. It carries out the reaction 5-aminomethyl-2-thiouridine(34) in tRNA + S-adenosyl-L-methionine = 5-methylaminomethyl-2-thiouridine(34) in tRNA + S-adenosyl-L-homocysteine + H(+). Catalyzes the last two steps in the biosynthesis of 5-methylaminomethyl-2-thiouridine (mnm(5)s(2)U) at the wobble position (U34) in tRNA. Catalyzes the FAD-dependent demodification of cmnm(5)s(2)U34 to nm(5)s(2)U34, followed by the transfer of a methyl group from S-adenosyl-L-methionine to nm(5)s(2)U34, to form mnm(5)s(2)U34. This chain is tRNA 5-methylaminomethyl-2-thiouridine biosynthesis bifunctional protein MnmC, found in Polaromonas naphthalenivorans (strain CJ2).